Reading from the N-terminus, the 604-residue chain is Sulfite reductase [NADPH] flavoprotein alpha-component (604 aa).

The 139-residue stretch at 65 to 203 (VTILYGSQTG…AAGQWHADVL (139 aa)) folds into the Flavodoxin-like domain. Residues 71 to 76 (SQTGNG), 118 to 121 (STHG), and 154 to 163 (LGDSSYEFFC) each bind FMN. The FAD-binding FR-type domain maps to 236-453 (QNPYSAEVLV…VEPNKHFRLP (218 aa)). FAD-binding positions include Thr324, Leu358, 392-395 (RLYS), 410-412 (TVA), and 425-428 (GGAS). NADP(+) is bound by residues 524 to 525 (SR), 530 to 534 (KIYVQ), and Asp566. Tyr604 contacts FAD.

It belongs to the NADPH-dependent sulphite reductase flavoprotein subunit CysJ family. In the N-terminal section; belongs to the flavodoxin family. This sequence in the C-terminal section; belongs to the flavoprotein pyridine nucleotide cytochrome reductase family. As to quaternary structure, alpha(8)-beta(8). The alpha component is a flavoprotein, the beta component is a hemoprotein. It depends on FAD as a cofactor. FMN is required as a cofactor.

It catalyses the reaction hydrogen sulfide + 3 NADP(+) + 3 H2O = sulfite + 3 NADPH + 4 H(+). The protein operates within sulfur metabolism; hydrogen sulfide biosynthesis; hydrogen sulfide from sulfite (NADPH route): step 1/1. Its function is as follows. Component of the sulfite reductase complex that catalyzes the 6-electron reduction of sulfite to sulfide. This is one of several activities required for the biosynthesis of L-cysteine from sulfate. The flavoprotein component catalyzes the electron flow from NADPH -&gt; FAD -&gt; FMN to the hemoprotein component. The sequence is that of Sulfite reductase [NADPH] flavoprotein alpha-component from Shewanella sp. (strain ANA-3).